The chain runs to 298 residues: Aspartate carbamoyltransferase catalytic subunit (298 aa).

Arginine 50 and threonine 51 together coordinate carbamoyl phosphate. Lysine 79 serves as a coordination point for L-aspartate. The carbamoyl phosphate site is built by arginine 100, histidine 128, and glutamine 131. The L-aspartate site is built by arginine 160 and arginine 221. Residues leucine 260 and proline 261 each contribute to the carbamoyl phosphate site.

The protein belongs to the aspartate/ornithine carbamoyltransferase superfamily. ATCase family. As to quaternary structure, heterooligomer of catalytic and regulatory chains.

It catalyses the reaction carbamoyl phosphate + L-aspartate = N-carbamoyl-L-aspartate + phosphate + H(+). It functions in the pathway pyrimidine metabolism; UMP biosynthesis via de novo pathway; (S)-dihydroorotate from bicarbonate: step 2/3. In terms of biological role, catalyzes the condensation of carbamoyl phosphate and aspartate to form carbamoyl aspartate and inorganic phosphate, the committed step in the de novo pyrimidine nucleotide biosynthesis pathway. This is Aspartate carbamoyltransferase catalytic subunit from Methanoculleus marisnigri (strain ATCC 35101 / DSM 1498 / JR1).